The chain runs to 704 residues: Elongation factor G (704 aa).

The region spanning 8 to 291 (DKVRNIGIMA…AVIDYLASPV (284 aa)) is the tr-type G domain. Residues 17 to 24 (AHIDAGKT), 90 to 94 (DTPGH), and 144 to 147 (NKMD) contribute to the GTP site.

It belongs to the TRAFAC class translation factor GTPase superfamily. Classic translation factor GTPase family. EF-G/EF-2 subfamily.

Its subcellular location is the cytoplasm. In terms of biological role, catalyzes the GTP-dependent ribosomal translocation step during translation elongation. During this step, the ribosome changes from the pre-translocational (PRE) to the post-translocational (POST) state as the newly formed A-site-bound peptidyl-tRNA and P-site-bound deacylated tRNA move to the P and E sites, respectively. Catalyzes the coordinated movement of the two tRNA molecules, the mRNA and conformational changes in the ribosome. The sequence is that of Elongation factor G from Chlorobaculum parvum (strain DSM 263 / NCIMB 8327) (Chlorobium vibrioforme subsp. thiosulfatophilum).